The sequence spans 388 residues: Succinate--CoA ligase [ADP-forming] subunit beta (388 aa).

The ATP-grasp domain maps to 9–244 (KQLFAEYGLP…PSQDDPREAH (236 aa)). ATP is bound by residues lysine 46, 53–55 (GRG), glutamate 99, threonine 102, and glutamate 107. Mg(2+) is bound by residues asparagine 199 and aspartate 213. Substrate-binding positions include asparagine 264 and 321–323 (GIV).

Belongs to the succinate/malate CoA ligase beta subunit family. In terms of assembly, heterotetramer of two alpha and two beta subunits. Mg(2+) is required as a cofactor.

It catalyses the reaction succinate + ATP + CoA = succinyl-CoA + ADP + phosphate. It carries out the reaction GTP + succinate + CoA = succinyl-CoA + GDP + phosphate. The protein operates within carbohydrate metabolism; tricarboxylic acid cycle; succinate from succinyl-CoA (ligase route): step 1/1. Its function is as follows. Succinyl-CoA synthetase functions in the citric acid cycle (TCA), coupling the hydrolysis of succinyl-CoA to the synthesis of either ATP or GTP and thus represents the only step of substrate-level phosphorylation in the TCA. The beta subunit provides nucleotide specificity of the enzyme and binds the substrate succinate, while the binding sites for coenzyme A and phosphate are found in the alpha subunit. The chain is Succinate--CoA ligase [ADP-forming] subunit beta from Pseudomonas syringae pv. tomato (strain ATCC BAA-871 / DC3000).